A 643-amino-acid chain; its full sequence is Uromodulin (643 aa).

Residues methionine 1–threonine 26 form the signal peptide. One can recognise an EGF-like 1 domain in the interval lysine 32–valine 66. 21 disulfides stabilise this stretch: cysteine 34–cysteine 43, cysteine 37–cysteine 52, cysteine 54–cysteine 65, cysteine 71–cysteine 85, cysteine 79–cysteine 94, cysteine 96–cysteine 108, cysteine 114–cysteine 128, cysteine 122–cysteine 137, cysteine 139–cysteine 150, cysteine 152–cysteine 163, cysteine 157–cysteine 172, cysteine 176–cysteine 269, cysteine 197–cysteine 284, cysteine 219–cysteine 257, cysteine 225–cysteine 289, cysteine 250–cysteine 258, cysteine 299–cysteine 308, cysteine 302–cysteine 317, cysteine 319–cysteine 349, cysteine 337–cysteine 427, and cysteine 368–cysteine 391. The N-linked (GlcNAc...) asparagine glycan is linked to asparagine 40. Residues aspartate 67–glutamate 109 form the EGF-like 2; calcium-binding domain. The N-linked (GlcNAc...) asparagine glycan is linked to asparagine 78. The EGF-like 3; calcium-binding domain occupies aspartate 110 to glutamate 151. Residue asparagine 134 is glycosylated (N-linked (GlcNAc...) asparagine). The interval cysteine 152–valine 173 is beta hairpin. Residues aspartate 174–serine 293 form a D10C region. N-linked (GlcNAc...) asparagine glycosylation occurs at asparagine 234. Asparagine 277 carries N-linked (GlcNAc...) asparagine glycosylation. Residues serine 294 to valine 325 form the EGF-like 4 domain. N-linked (GlcNAc...) asparagine glycosylation is present at asparagine 324. Residues glutamate 336–leucine 431 are ZP-N. The region spanning glutamate 336–threonine 587 is the ZP domain. Asparagine 398 and asparagine 449 each carry an N-linked (GlcNAc...) asparagine glycan. Residues aspartate 432–threonine 455 form a flexible ZP-N/ZP-C linker; important for secretion and polymerization into filaments region. The tract at residues glycine 456 to glutamine 466 is internal hydrophobic patch (IHP). The tract at residues glycine 456–threonine 587 is ZP-C. 3 disulfides stabilise this stretch: cysteine 508/cysteine 568, cysteine 529/cysteine 584, and cysteine 573/cysteine 580. Asparagine 515 carries an N-linked (GlcNAc...) asparagine glycan. Residues arginine 588–serine 591 form an essential for cleavage by HPN region. Residues valine 600–arginine 608 form an external hydrophobic patch (EHP); regulates polymerization into filaments region. Serine 621 is lipidated: GPI-anchor amidated serine. Residues serine 622 to proline 643 constitute a propeptide, removed in mature form.

As to quaternary structure, homodimer that then polymerizes into long filaments. The filaments can additionally assemble laterally to form a sheet. The filaments consist of a zigzag-shaped backbone with laterally protruding arms which interact with bacterial adhesin fimH. Two fimH molecules can bind to a single UMOD monomer. N-glycosylated. In terms of processing, proteolytically cleaved at a conserved C-terminal proteolytic cleavage site to generate the secreted form found in urine. This cleavage is catalyzed by HPN.

The protein localises to the apical cell membrane. It localises to the basolateral cell membrane. It is found in the cell projection. The protein resides in the cilium membrane. Its subcellular location is the secreted. Functions in biogenesis and organization of the apical membrane of epithelial cells of the thick ascending limb of Henle's loop (TALH), where it promotes formation of complex filamentous gel-like structure that may play a role in the water barrier permeability. May serve as a receptor for binding and endocytosis of cytokines (IL-1, IL-2) and TNF. Facilitates neutrophil migration across renal epithelia. In terms of biological role, in the urine, may contribute to colloid osmotic pressure, retards passage of positively charged electrolytes, and inhibits formation of liquid containing supersaturated salts and subsequent formation of salt crystals. Protects against urinary tract infections by binding to type 1 fimbriated E.coli. Binds to bacterial adhesin fimH which mediates the stable formation of bacterial aggregates, prevents the binding of E.coli to uroplakins UPK1A and UPK1B which act as urothelial receptors for type I fimbriae, and allows for pathogen clearance through micturation. Also promotes aggregation of other bacteria including K.pneumoniae, P.aeruginosa and S.mitis and so may also protect against other uropathogens. This is Uromodulin (UMOD) from Bos taurus (Bovine).